Reading from the N-terminus, the 279-residue chain is CDP-paratose synthase (279 aa).

Tyrosine 115 serves as the catalytic Proton acceptor.

It belongs to the NAD(P)-dependent epimerase/dehydratase family.

The catalysed reaction is CDP-alpha-D-paratose + NADP(+) = CDP-4-dehydro-3,6-dideoxy-alpha-D-glucose + NADPH + H(+). It functions in the pathway nucleotide-sugar biosynthesis; CDP-3,6-dideoxy-D-mannose biosynthesis; CDP-3,6-dideoxy-D-mannose from CTP and alpha-D-glucose 1-phosphate: step 4/5. Functionally, catalyzes synthesis of paratose and tyvelose, unusual 3,6-dideoxyhexose sugars that form part of the O-antigen in the lipopolysaccharides of several enteric bacteria. This is CDP-paratose synthase (rfbS) from Salmonella typhi.